A 673-amino-acid chain; its full sequence is Sodium/myo-inositol cotransporter 2 (673 aa).

Over 1–27 (MESTTSSPQPPPSDALEAFPQKSMEPA) the chain is Extracellular. A helical transmembrane segment spans residues 28-48 (DIVVLVLYFLFVLAVGLWSTV). The Cytoplasmic portion of the chain corresponds to 49 to 56 (RTKRDTVK). A helical membrane pass occupies residues 57 to 77 (GYFLAGGDMVWWPVGASLFAS). A topological domain (extracellular) is located at residue asparagine 78. Residues 79–99 (VGSGHFIGLAGSGAAVGISVA) form a helical membrane-spanning segment. Topologically, residues 100–102 (AYE) are cytoplasmic. Residues 103–123 (LNGLFSVLMLAWIFLPIYIAG) form a helical membrane-spanning segment. The Extracellular portion of the chain corresponds to 124 to 180 (QVTTMPEYLKRRFGGSRIPITLASIYPSTHSLTILQVDMYAGAIFIQQSLHLDLYLA). The helical transmembrane segment at 181–201 (IVGLLAVTALYTVAGGLAAVI) threads the bilayer. Topologically, residues 202 to 208 (YTDALQT) are cytoplasmic. Residues 209–229 (VIMLIGAFILMGYSFAAVGGM) traverse the membrane as a helical segment. Over 230 to 272 (EGLKDQYFLALASNRSENSSCGLPREDAFHIFRDPLTSDLPWP) the chain is Extracellular. The helical transmembrane segment at 273–293 (GILFGMSIPSLWYWCTDQVIV) threads the bilayer. Residues 294–308 (QRSLAAKNLSHAKGG) lie on the Cytoplasmic side of the membrane. A helical transmembrane segment spans residues 309–329 (SLMAAYLKVLPLFLMVFPGMV). At 330-375 (SRILFPDQVACAHPDICQRVCSNPSGCSDIAYPKLVLELLPTGLRG) the chain is on the extracellular side. Residues 376 to 396 (LMMAVMVAALMSSLTSIFNSA) form a helical membrane-spanning segment. Residues 397 to 418 (STIFTMDLWHHIRPRASERELM) are Cytoplasmic-facing. Residues 419–439 (IVGRVFVLALVLVSILWIPVV) form a helical membrane-spanning segment. At 440–446 (QASQGGQ) the chain is on the extracellular side. A helical transmembrane segment spans residues 447–467 (LFIYIQSISSYLQPPVAVVFI). Topologically, residues 468–479 (MGCFWKRTNEKG) are cytoplasmic. A helical transmembrane segment spans residues 480 to 500 (AFSGLILGLLLGLVRLILDFV). The Extracellular segment spans residues 501–521 (YVQPRCDQPDDRPAVVKDVHY). Residues 522-542 (LYFSMILSSTTLITVFTVSWF) traverse the membrane as a helical segment. The Cytoplasmic segment spans residues 543-652 (TETPSKEMVS…SLEENPLVKT (110 aa)). A helical transmembrane segment spans residues 653–673 (LLDVNCIVCISCAIFLWGYFA).

This sequence belongs to the sodium:solute symporter (SSF) (TC 2.A.21) family. In terms of tissue distribution, expressed in kidney and small intestine.

It localises to the membrane. The protein resides in the apical cell membrane. The catalysed reaction is myo-inositol(out) + 2 Na(+)(out) = myo-inositol(in) + 2 Na(+)(in). It carries out the reaction 1D-chiro-inositol(out) + 2 Na(+)(out) = 1D-chiro-inositol(in) + 2 Na(+)(in). It catalyses the reaction D-glucose(out) + 2 Na(+)(out) = D-glucose(in) + 2 Na(+)(in). The enzyme catalyses D-xylose(out) + 2 Na(+)(out) = D-xylose(in) + 2 Na(+)(in). With respect to regulation, MI transport activity inhibited by D-chiro-inositol (DCI), phlorizin (Pz) and sodium (Na(+)). Insulin increases D-chiro-inositol uptake. Involved in the sodium-dependent cotransport of myo-inositol (MI) with a Na(+):MI stoichiometry of 2:1. Exclusively responsible for apical MI transport and absorption in intestine. Can also transport D-chiro-inositol (DCI) but not L-fucose. Exhibits stereospecific cotransport of both D-glucose and D-xylose. May induce apoptosis through the TNF-alpha, PDCD1 pathway. May play a role in the regulation of MI concentration in serum, involving reabsorption in at least the proximal tubule of the kidney. The sequence is that of Sodium/myo-inositol cotransporter 2 from Rattus norvegicus (Rat).